Reading from the N-terminus, the 359-residue chain is MASTGRVLLLSPPSLSSHPEKLNAILGSHTRDRTDLQMLDRLVHGLVSLPASTYDIVLLLTGADNTLAEPYSLVTRDIIQQVVHSLKPAGKLRSQDNKAWGLRSSGNNSDDDNDNDELTFRNEAILAGLVFDDNGELLKPDVAAQQAVPLKLGRRKKEKERRHPSGNDVTNGKVNAPSSNGVNASTSTATATATTTTTTTPKTNPAPSGVGFIDFSDDYGVPMEEDPQGSDDELIDEDELLGEDDMGRPIVQPPECRPKPGKRRRACKDCSCGLSQKLEAEDKAKRATADKALETIMAPTMKLGSSELAEVDFTVQGKVGSCGNCSLGDAFRCDGCPYIGLPAFKPGEEVRLLNNDVQL.

An N-terminal SAM-like domain region spans residues Met-1–Val-148. Disordered stretches follow at residues Asn-97–Asp-116 and Pro-149–Val-210. The interval Pro-149–Met-246 is linker. Residues Leu-152–Pro-164 are compositionally biased toward basic residues. The segment covering Asn-167–Asn-183 has biased composition (polar residues). The span at Ala-184 to Thr-200 shows a compositional bias: low complexity. Residues Cys-256, Cys-267, Cys-270, and Cys-272 each coordinate [2Fe-2S] cluster. Residues Cys-256–Cys-272 form a fe-S binding site A region. 4 residues coordinate [4Fe-4S] cluster: Cys-322, Cys-325, Cys-333, and Cys-336. Short sequence motifs (cx2C motif) lie at residues Cys-322–Cys-325 and Cys-333–Cys-336. The tract at residues Cys-322 to Cys-336 is fe-S binding site B.

The protein belongs to the anamorsin family. In terms of assembly, monomer. Interacts with TAH18. Interacts with MIA40. It depends on [2Fe-2S] cluster as a cofactor. Requires [4Fe-4S] cluster as cofactor.

The protein localises to the cytoplasm. The protein resides in the mitochondrion intermembrane space. Component of the cytosolic iron-sulfur (Fe-S) protein assembly (CIA) machinery required for the maturation of extramitochondrial Fe-S proteins. Part of an electron transfer chain functioning in an early step of cytosolic Fe-S biogenesis, facilitating the de novo assembly of a [4Fe-4S] cluster on the scaffold complex CFD1-NBP35. Electrons are transferred to DRE2 from NADPH via the FAD- and FMN-containing protein TAH18. TAH18-DRE2 are also required for the assembly of the diferric tyrosyl radical cofactor of ribonucleotide reductase (RNR), probably by providing electrons for reduction during radical cofactor maturation in the catalytic small subunit RNR2. The protein is Fe-S cluster assembly protein DRE2 of Blastomyces gilchristii (strain SLH14081) (Blastomyces dermatitidis).